We begin with the raw amino-acid sequence, 778 residues long: Zinc finger protein 749 (778 aa).

Residues 8–101 (MVFEDVAIYF…ILKDILHLAE (94 aa)) form the KRAB domain. Residues 152-174 (FTCTQGGKDFTASSDLLQQQVLN) form a C2H2-type 1; degenerate zinc finger. Residues 196 to 218 (FNSSQGGKDFCHQHGLFEHQKTH) form a C2H2-type 2; degenerate zinc finger. The C2H2-type 3; degenerate zinc finger occupies 224 to 246 (YEFSECGELFRYNSNLIKYQQNH). A C2H2-type 4; degenerate zinc finger spans residues 252 to 274 (YEGTEYGKTFIRKSNLVQHQKIH). C2H2-type zinc fingers lie at residues 298–320 (YECTQCGKAFLTQAHLVGHQKTH), 326–348 (YECNKCGKFFMYNSKLIRHQKVH), 354–376 (YECSECGKLFMDSFTLGRHQRVH), 382–404 (FECSICGKFFSHRSTLNMHQRVH), 410–432 (YKCSECGKAFSLKHNVVQHLKIH), and 438–460 (YECTECEKAFVRKSHLVQHQKIH). An N6-acetyllysine modification is found at K466. 2 consecutive C2H2-type zinc fingers follow at residues 483–505 (YTCSECGKAFLTQAHLVGHQKIH) and 511–533 (YECTQCAKAFVRKSHLVQHEKIH). An N6-acetyllysine modification is found at K539. The C2H2-type 13; degenerate zinc-finger motif lies at 556 to 578 (YVCSECGKAFLTQAHLDGHQKIQ). 3 C2H2-type zinc fingers span residues 584–606 (YECNECGKFFLDSYKLVIHQRIH), 612–634 (YKCSKCGKFFRYRCTLSRHQKVH), and 640–662 (YECSECGKFFRDSYKLIIHQRVH). The C2H2-type 17; atypical zinc finger occupies 668–690 (YECSNCGKFLRYRSTFIKHHKVC). The segment at 696–718 (HECSKCRELFRTKSSLIIHQQSH) adopts a C2H2-type 18 zinc-finger fold. The C2H2-type 19; degenerate zinc finger occupies 751–773 (YECGESSKVFKYNSSLIKHQIIH). Glycyl lysine isopeptide (Lys-Gly) (interchain with G-Cter in SUMO2) cross-links involve residues K761 and K768.

This sequence belongs to the krueppel C2H2-type zinc-finger protein family.

It is found in the nucleus. May be involved in transcriptional regulation. The sequence is that of Zinc finger protein 749 (ZNF749) from Homo sapiens (Human).